We begin with the raw amino-acid sequence, 170 residues long: Flavodoxin (170 aa).

The 162-residue stretch at 4 to 165 (IGLFYGTQTG…RVKTWVSEIK (162 aa)) folds into the Flavodoxin-like domain.

The protein belongs to the flavodoxin family. Requires FMN as cofactor.

Low-potential electron donor to a number of redox enzymes. This chain is Flavodoxin (isiB), found in Synechocystis sp. (strain ATCC 27184 / PCC 6803 / Kazusa).